The primary structure comprises 180 residues: Signal peptidase complex subunit 2 (180 aa).

The Cytoplasmic segment spans residues 1-45; sequence MSDERITVVNKWDGPTVKNGLDEVVKKILNDKVGWTEQHNLMNLR. The helical transmembrane segment at 46–66 threads the bilayer; it reads LLISFIGVAFSAFACGYDFYA. At 67–72 the chain is on the lumenal side; it reads PFPKSK. A helical membrane pass occupies residues 73–93; it reads IVLLVCSVSYFICMGVLQLFQ. At 94 to 180 the chain is on the cytoplasmic side; the sequence is WYVEKDCFYE…LWARLIRSEQ (87 aa).

The protein belongs to the SPCS2 family. In terms of assembly, component of the signal peptidase complex (SPC) composed of a catalytic subunit sec-11 and three accessory subunits spcs-1, spcs-2 and spcs-3. The complex induces a local thinning of the ER membrane which is used to measure the length of the signal peptide (SP) h-region of protein substrates. This ensures the selectivity of the complex towards h-regions shorter than 18-20 amino acids.

The protein resides in the endoplasmic reticulum membrane. Component of the signal peptidase complex (SPC) which catalyzes the cleavage of N-terminal signal sequences from nascent proteins as they are translocated into the lumen of the endoplasmic reticulum. Enhances the enzymatic activity of SPC and facilitates the interactions between different components of the translocation site. The protein is Signal peptidase complex subunit 2 of Caenorhabditis briggsae.